A 746-amino-acid polypeptide reads, in one-letter code: Ribosome biogenesis protein BOP1 (746 aa).

Residues 1 to 116 (MAGSRGAGRT…PCPRTEMASA (116 aa)) are disordered. The segment covering 43–65 (SHSTGSDSGVSDSEESVFSGLED) has biased composition (low complexity). The span at 66–87 (SGSDSSEDDDEGDEEGEDGALD) shows a compositional bias: acidic residues. The segment covering 88–99 (DEGHSGIKKTTE) has biased composition (basic and acidic residues). T106 carries the post-translational modification Phosphothreonine. A Phosphotyrosine modification is found at Y122. Phosphoserine is present on residues S126 and S127. Residues 265-427 (MGWIQPRRPR…CLSVSPGGQW (163 aa)) form a sufficient for nucleolar localization region. WD repeat units lie at residues 411-450 (GHSD…CVRT), 452-492 (PVGG…RLVA), 532-576 (CHGK…SPFR), 577-615 (RSHG…LTKK), 618-657 (PNCK…KPYR), 661-700 (HHKK…DLLQ), and 716-746 (TRDL…RLFT).

The protein belongs to the WD repeat BOP1/ERB1 family. In terms of assembly, component of the PeBoW complex, composed of BOP1, PES1 and WDR12. The complex is held together by BOP1, which interacts with PES1 via its N-terminal domain and with WDR12 via a high-affinity interaction between the seven-bladed beta-propeller domains of the 2 proteins. The NOP7 complex associates with the 66S pre-ribosome. The PeBoW complex associates with DDX27, BOP1 interacts directly with DDX27.

The protein resides in the nucleus. It localises to the nucleolus. It is found in the nucleoplasm. Functionally, component of the PeBoW complex, which is required for maturation of 28S and 5.8S ribosomal RNAs and formation of the 60S ribosome. The protein is Ribosome biogenesis protein BOP1 of Homo sapiens (Human).